We begin with the raw amino-acid sequence, 289 residues long: MANLKEIRAKVASIKSTQKITRAMQMVAASKMRRAQERMAQGRPYADNMRRVIAHLVQANPEYKHRYMVDRPVKRVGYIIVSSDRGLAGGLNINLFKKVVQHVKAQQEQSIEVQFALIGQKAVSFFKNYGGKVLGATTQIGDAPSLEQLTGSVQVMLDAFDKGELDRIYLVSNGFVNAMTQKPKVEQLVPLAPAEEGDDLNRTYGWDYIYEPEAEELLNGLLVRYIESMVYQGVIENVACEQSARMVAMKAATDNAGQLIKDLQLIYNKLRQAAITQEISEIVGGAAAV.

This sequence belongs to the ATPase gamma chain family. In terms of assembly, F-type ATPases have 2 components, CF(1) - the catalytic core - and CF(0) - the membrane proton channel. CF(1) has five subunits: alpha(3), beta(3), gamma(1), delta(1), epsilon(1). CF(0) has three main subunits: a, b and c.

The protein localises to the cell inner membrane. Produces ATP from ADP in the presence of a proton gradient across the membrane. The gamma chain is believed to be important in regulating ATPase activity and the flow of protons through the CF(0) complex. The chain is ATP synthase gamma chain from Acinetobacter baumannii (strain AB307-0294).